An 82-amino-acid chain; its full sequence is Small ribosomal subunit protein bS20 (82 aa).

The protein belongs to the bacterial ribosomal protein bS20 family.

Its function is as follows. Binds directly to 16S ribosomal RNA. This is Small ribosomal subunit protein bS20 from Lysinibacillus sphaericus (strain C3-41).